A 322-amino-acid chain; its full sequence is Ferredoxin--NADP reductase (322 aa).

FAD is bound by residues L87, F119, D279, and T320.

The protein belongs to the ferredoxin--NADP reductase type 2 family. In terms of assembly, homodimer. The cofactor is FAD.

It catalyses the reaction 2 reduced [2Fe-2S]-[ferredoxin] + NADP(+) + H(+) = 2 oxidized [2Fe-2S]-[ferredoxin] + NADPH. This chain is Ferredoxin--NADP reductase, found in Streptococcus suis (strain 98HAH33).